We begin with the raw amino-acid sequence, 339 residues long: uncharacterized protein (339 aa).

The disordered stretch occupies residues 1-24 (IQPARRHTKNTNMAKHTTKGTGHS). The span at 10–21 (NTNMAKHTTKGT) shows a compositional bias: polar residues.

The protein localises to the mitochondrion. This is an uncharacterized protein from Zea mays (Maize).